Reading from the N-terminus, the 143-residue chain is Ribosome-binding factor A (143 aa).

The segment at 123–143 (DKSLQENYKQNDKETKAEKLR) is disordered.

This sequence belongs to the RbfA family. As to quaternary structure, monomer. Binds 30S ribosomal subunits, but not 50S ribosomal subunits or 70S ribosomes.

It localises to the cytoplasm. Its function is as follows. One of several proteins that assist in the late maturation steps of the functional core of the 30S ribosomal subunit. Associates with free 30S ribosomal subunits (but not with 30S subunits that are part of 70S ribosomes or polysomes). Required for efficient processing of 16S rRNA. May interact with the 5'-terminal helix region of 16S rRNA. The sequence is that of Ribosome-binding factor A from Francisella tularensis subsp. novicida (strain U112).